A 79-amino-acid polypeptide reads, in one-letter code: Secretory calcium-binding phosphoprotein proline-glutamine rich 1 (79 aa).

Positions 1 to 15 (MKFLILAGLLSTATA) are cleaved as a signal peptide.

The protein localises to the secreted. Functionally, tooth-associated epithelia protein that may participate in structuring the basal lamina at cell-tooth interface. The protein is Secretory calcium-binding phosphoprotein proline-glutamine rich 1 of Homo sapiens (Human).